Consider the following 54-residue polypeptide: Lectin alpha chain (54 aa).

It belongs to the leguminous lectin family. Tetramer of two alpha and two beta chains.

The chain is Lectin alpha chain from Lathyrus tingitanus (Tangier pea).